The primary structure comprises 467 residues: Membrane-bound lytic murein transglycosylase F (467 aa).

Residues 1 to 33 (MTELFRHSKHLLASLALLSVLGLMLAMHPSPSA) form the signal peptide. The non-LT domain stretch occupies residues 34 to 266 (IERIMARGEL…KLEDRFYGHV (233 aa)). An LT domain region spans residues 268–467 (QFNLYAARSF…RRDDTLIALN (200 aa)). Glutamate 313 is an active-site residue.

In the N-terminal section; belongs to the bacterial solute-binding protein 3 family. This sequence in the C-terminal section; belongs to the transglycosylase Slt family.

The protein resides in the cell outer membrane. The catalysed reaction is Exolytic cleavage of the (1-&gt;4)-beta-glycosidic linkage between N-acetylmuramic acid (MurNAc) and N-acetylglucosamine (GlcNAc) residues in peptidoglycan, from either the reducing or the non-reducing ends of the peptidoglycan chains, with concomitant formation of a 1,6-anhydrobond in the MurNAc residue.. Murein-degrading enzyme that degrades murein glycan strands and insoluble, high-molecular weight murein sacculi, with the concomitant formation of a 1,6-anhydromuramoyl product. Lytic transglycosylases (LTs) play an integral role in the metabolism of the peptidoglycan (PG) sacculus. Their lytic action creates space within the PG sacculus to allow for its expansion as well as for the insertion of various structures such as secretion systems and flagella. The polypeptide is Membrane-bound lytic murein transglycosylase F (Alcanivorax borkumensis (strain ATCC 700651 / DSM 11573 / NCIMB 13689 / SK2)).